A 353-amino-acid polypeptide reads, in one-letter code: Abasic site processing protein HMCES (353 aa).

Cys-2 functions as the Nucleophile in the catalytic mechanism. Cys-2 carries the post-translational modification Thiazolidine linkage to a ring-opened DNA abasic site. Glu-127 is an active-site residue. Glycyl lysine isopeptide (Lys-Gly) (interchain with G-Cter in SUMO2) cross-links involve residues Lys-148 and Lys-151. The residue at position 160 (Ser-160) is a Phosphoserine. Residues Lys-274 and Lys-275 each participate in a glycyl lysine isopeptide (Lys-Gly) (interchain with G-Cter in SUMO2) cross-link. A disordered region spans residues 292 to 353; the sequence is TKSPKKEVPD…DEPVAKRPNS (62 aa). Ser-294 carries the phosphoserine modification. Over residues 295 to 307 the composition is skewed to basic and acidic residues; sequence PKKEVPDSPKKDA. Residue Lys-305 forms a Glycyl lysine isopeptide (Lys-Gly) (interchain with G-Cter in SUMO2) linkage. Phosphoserine is present on Ser-321. A PIP-box motif is present at residues 332–338; the sequence is SLLDRWL. The span at 336–353 shows a compositional bias: basic and acidic residues; it reads RWLKQEKEDEPVAKRPNS. Glycyl lysine isopeptide (Lys-Gly) (interchain with G-Cter in SUMO2) cross-links involve residues Lys-339 and Lys-342.

It belongs to the SOS response-associated peptidase family. Interacts (via PIP-box motif) with PCNA. Ubiquitinated; the covalent HMCES DNA-protein cross-link is ubiquitinated, leading to its degradation by the proteasome.

The protein resides in the chromosome. With respect to regulation, formation and reversal of DNA-protein cross-link depends on DNA context. Catalyzes formation of the thiazolidine linkage in presence of abasic sites in single-stranded DNA. Mediates the reversal of the thiazolidine cross-link in presence of double stranded DNA. Sensor of abasic sites in single-stranded DNA (ssDNA) required to preserve genome integrity by promoting error-free repair of abasic sites. Acts as an enzyme that recognizes and binds abasic sites in ssDNA at replication forks and chemically modifies the lesion by forming a covalent cross-link with DNA: forms a stable thiazolidine linkage between a ring-opened abasic site and the alpha-amino and sulfhydryl substituents of its N-terminal catalytic cysteine residue. Promotes error-free repair by protecting abasic sites from translesion synthesis (TLS) polymerases and endonucleases that are error-prone and would generate mutations and double-strand breaks. The HMCES DNA-protein cross-link is then either reversed or degraded. HMCES is able to catalyze the reversal of its thiazolidine cross-link and cycle between a cross-link and a non-cross-linked state depending on DNA context: mediates self-reversal of the thiazolidine cross-link in double stranded DNA, allowing APEX1 to initiate downstream repair of abasic sites. The HMCES DNA-protein cross-link can also be degraded by the SPRTN metalloprotease following unfolding by the BRIP1/FANCJ helicase. Has preference for ssDNA, but can also accommodate double-stranded DNA with 3' or 5' overhang (dsDNA), and dsDNA-ssDNA 3' junction. Plays a protective role during somatic hypermutation of immunoglobulin genes in B-cells: acts via its ability to form covalent cross-links with abasic sites, thereby limiting the accumulation of deletions in somatic hypermutation target regions. Also involved in class switch recombination (CSR) in B-cells independently of the formation of a DNA-protein cross-link: acts by binding and protecting ssDNA overhangs to promote DNA double-strand break repair through the microhomology-mediated alternative-end-joining (Alt-EJ) pathway. Acts as a protease: mediates autocatalytic processing of its N-terminal methionine in order to expose the catalytic cysteine. The sequence is that of Abasic site processing protein HMCES from Rattus norvegicus (Rat).